Here is a 463-residue protein sequence, read N- to C-terminus: NADH dehydrogenase [ubiquinone] iron-sulfur protein 2, mitochondrial (463 aa).

The transit peptide at 1–33 (MAALRVLCGLRGVAAQVLRPGAGVRLPIQPSRG) directs the protein to the mitochondrion. N6-acetyllysine is present on K62. The residue at position 118 (R118) is a Symmetric dimethylarginine. Residues C326, C332, and C347 each coordinate [4Fe-4S] cluster.

Belongs to the complex I 49 kDa subunit family. Core subunit of respiratory chain NADH dehydrogenase (Complex I) which is composed of 45 different subunits. Component of the iron-sulfur (IP) fragment of the enzyme. Interacts with NDUFAF3. Interacts with NDUFAF7. Interacts with CERS2. [4Fe-4S] cluster is required as a cofactor. Dimethylation at Arg-118 by NDUFAF7 takes place after NDUFS2 assembles into the complex I, leading to stabilize the early intermediate complex.

It is found in the mitochondrion inner membrane. The catalysed reaction is a ubiquinone + NADH + 5 H(+)(in) = a ubiquinol + NAD(+) + 4 H(+)(out). In terms of biological role, core subunit of the mitochondrial membrane respiratory chain NADH dehydrogenase (Complex I) which catalyzes electron transfer from NADH through the respiratory chain, using ubiquinone as an electron acceptor. Essential for the catalytic activity and assembly of complex I. Redox-sensitive, critical component of the oxygen-sensing pathway in the pulmonary vasculature which plays a key role in acute pulmonary oxygen-sensing and hypoxic pulmonary vasoconstriction. Plays an important role in carotid body sensing of hypoxia. Essential for glia-like neural stem and progenitor cell proliferation, differentiation and subsequent oligodendrocyte or neuronal maturation. The sequence is that of NADH dehydrogenase [ubiquinone] iron-sulfur protein 2, mitochondrial (NDUFS2) from Gorilla gorilla gorilla (Western lowland gorilla).